The following is a 57-amino-acid chain: Large ribosomal subunit protein bL33 (57 aa).

Belongs to the bacterial ribosomal protein bL33 family.

This chain is Large ribosomal subunit protein bL33, found in Shewanella halifaxensis (strain HAW-EB4).